Reading from the N-terminus, the 226-residue chain is ATP synthase F(0) complex subunit a (226 aa).

A run of 6 helical transmembrane segments spans residues 6–26 (FASF…IIMF), 68–88 (WSLM…LGLL), 97–117 (QLSM…FTGF), 136–156 (LLIP…PVAL), 164–184 (ITAG…LLNI), and 189–209 (AFIT…VALI).

The protein belongs to the ATPase A chain family. As to quaternary structure, component of the ATP synthase complex composed at least of ATP5F1A/subunit alpha, ATP5F1B/subunit beta, ATP5MC1/subunit c (homooctomer), MT-ATP6/subunit a, MT-ATP8/subunit 8, ATP5ME/subunit e, ATP5MF/subunit f, ATP5MG/subunit g, ATP5MK/subunit k, ATP5MJ/subunit j, ATP5F1C/subunit gamma, ATP5F1D/subunit delta, ATP5F1E/subunit epsilon, ATP5PF/subunit F6, ATP5PB/subunit b, ATP5PD/subunit d, ATP5PO/subunit OSCP. ATP synthase complex consists of a soluble F(1) head domain (subunits alpha(3) and beta(3)) - the catalytic core - and a membrane F(0) domain - the membrane proton channel (subunits c, a, 8, e, f, g, k and j). These two domains are linked by a central stalk (subunits gamma, delta, and epsilon) rotating inside the F1 region and a stationary peripheral stalk (subunits F6, b, d, and OSCP). Interacts with DNAJC30; interaction is direct.

The protein resides in the mitochondrion inner membrane. The catalysed reaction is H(+)(in) = H(+)(out). In terms of biological role, subunit a, of the mitochondrial membrane ATP synthase complex (F(1)F(0) ATP synthase or Complex V) that produces ATP from ADP in the presence of a proton gradient across the membrane which is generated by electron transport complexes of the respiratory chain. ATP synthase complex consist of a soluble F(1) head domain - the catalytic core - and a membrane F(1) domain - the membrane proton channel. These two domains are linked by a central stalk rotating inside the F(1) region and a stationary peripheral stalk. During catalysis, ATP synthesis in the catalytic domain of F(1) is coupled via a rotary mechanism of the central stalk subunits to proton translocation. With the subunit c (ATP5MC1), forms the proton-conducting channel in the F(0) domain, that contains two crucial half-channels (inlet and outlet) that facilitate proton movement from the mitochondrial intermembrane space (IMS) into the matrix. Protons are taken up via the inlet half-channel and released through the outlet half-channel, following a Grotthuss mechanism. This Sus scrofa (Pig) protein is ATP synthase F(0) complex subunit a.